We begin with the raw amino-acid sequence, 408 residues long: Argininosuccinate synthase (408 aa).

Residues 8–16 and Ala35 contribute to the ATP site; that span reads AYSGGLDTT. L-citrulline contacts are provided by Tyr86 and Ser91. Gly116 serves as a coordination point for ATP. The L-aspartate site is built by Thr118, Asn122, and Asp123. An L-citrulline-binding site is contributed by Asn122. Positions 126, 177, 186, 263, and 275 each coordinate L-citrulline.

The protein belongs to the argininosuccinate synthase family. Type 1 subfamily. As to quaternary structure, homotetramer.

The protein localises to the cytoplasm. It carries out the reaction L-citrulline + L-aspartate + ATP = 2-(N(omega)-L-arginino)succinate + AMP + diphosphate + H(+). It functions in the pathway amino-acid biosynthesis; L-arginine biosynthesis; L-arginine from L-ornithine and carbamoyl phosphate: step 2/3. This is Argininosuccinate synthase from Lachnospira eligens (strain ATCC 27750 / DSM 3376 / VPI C15-48 / C15-B4) (Eubacterium eligens).